The primary structure comprises 570 residues: Interleukin-1 receptor accessory protein (570 aa).

Positions 1 to 20 (MTLLWCVVSLYFYGILQSDA) are cleaved as a signal peptide. 3 Ig-like C2-type domains span residues 21-128 (SERC…VAFP), 136-226 (SCFN…FHLT), and 242-350 (PPVI…VKQK). At 21-367 (SERCDDWGLD…VELACGFGAT (347 aa)) the chain is on the extracellular side. Disulfide bonds link Cys24–Cys122, Cys47–Cys114, Cys137–Cys181, Cys160–Cys212, and Cys266–Cys332. Asn57 carries an N-linked (GlcNAc...) asparagine glycan. The tract at residues 69-85 (IWYWTRQDRDLEEPINF) is essential for interaction with PTPRD. N-linked (GlcNAc...) asparagine glycans are attached at residues Asn107, Asn111, and Asn118. N-linked (GlcNAc...) asparagine glycosylation is found at Asn196, Asn209, and Asn299. A helical membrane pass occupies residues 368-388 (VLLVVILIVVYHVYWLEMVLF). The Cytoplasmic portion of the chain corresponds to 389-570 (YRAHFGTDET…GLSYSSLKNV (182 aa)). The 144-residue stretch at 403–546 (KEYDIYVSYA…RFWKQLQVAM (144 aa)) folds into the TIR domain. Glu482 is a catalytic residue. Residues 549 to 570 (KKSPRRSSSDEQGLSYSSLKNV) are disordered. Phosphoserine is present on Ser557. Polar residues predominate over residues 558 to 570 (DEQGLSYSSLKNV).

This sequence belongs to the interleukin-1 receptor family. As to quaternary structure, the interleukin-36 receptor complex is a heterodimer of IL1RL2 and IL1RAP; the association is inhibited by IL36RN. The interleukin-1 receptor complex is a heterodimer of IL1R1 and IL1RAP. Associates with IL1R2 to form a non-signaling interleukin-1 receptor complex. Interacts with IL-33-bound IL1RL1 to form the minimal interleukin-33 signaling complex with a 1:1:1 stoichiometry. Interacts with KIT (independently of stimulation with KITLG/SCF). A mast cell-specific KITLG/SCF-induced interleukin-33 signaling complex contains IL1RL1, IL1RAP, KIT and MYD88. Interacts (via the first immunoglobilin domain) with PTPRD (via the third immunoglobilin domain); induces pre- and postsynaptic differentiation of neurons.

It is found in the cell membrane. The protein resides in the secreted. The enzyme catalyses NAD(+) + H2O = ADP-D-ribose + nicotinamide + H(+). Coreceptor for IL1RL2 in the IL-36 signaling system. Coreceptor with IL1R1 in the IL-1 signaling system. Associates with IL1R1 bound to IL1B to form the high affinity interleukin-1 receptor complex which mediates interleukin-1-dependent activation of NF-kappa-B and other pathways. Signaling involves the recruitment of adapter molecules such as TOLLIP, MYD88, and IRAK1 or IRAK2 via the respective TIR domains of the receptor/coreceptor subunits. Recruits TOLLIP to the signaling complex. Does not bind to interleukin-1 alone; binding of IL1RN to IL1R1, prevents its association with IL1R1 to form a signaling complex. The cellular response is modulated through a non-signaling association with the membrane IL1R2 decoy receptor. Coreceptor for IL1RL1 in the IL-33 signaling system. Can bidirectionally induce pre- and postsynaptic differentiation of neurons by trans-synaptically binding to PTPRD. May play a role in IL1B-mediated costimulation of IFNG production from T-helper 1 (Th1) cells. Its function is as follows. Associates with secreted ligand-bound IL1R2 and increases the affinity of secreted IL1R2 for IL1B; this complex formation may be the dominant mechanism for neutralization of IL1B by secreted/soluble receptors. Enhances the ability of secreted IL1R1 to inhibit IL-33 signaling. The chain is Interleukin-1 receptor accessory protein (IL1RAP) from Macaca mulatta (Rhesus macaque).